Reading from the N-terminus, the 191-residue chain is Guanylate kinase (191 aa).

Residues 10 to 188 (GQLIVLTGPS…ALHRLVKLIG (179 aa)) form the Guanylate kinase-like domain. 17–24 (GPSGVGKG) provides a ligand contact to ATP.

This sequence belongs to the guanylate kinase family.

The protein localises to the cytoplasm. The catalysed reaction is GMP + ATP = GDP + ADP. Functionally, essential for recycling GMP and indirectly, cGMP. The protein is Guanylate kinase (gmk) of Synechocystis sp. (strain ATCC 27184 / PCC 6803 / Kazusa).